The sequence spans 230 residues: UPF0758 protein ABC2615 (230 aa).

Residues 104-226 enclose the MPN domain; the sequence is VISSPEDAAE…FISLKERGFF (123 aa). Zn(2+) contacts are provided by H175, H177, and D188. The JAMM motif signature appears at 175–188; it reads HNHPSGDPSPSPED.

The protein belongs to the UPF0758 family.

This is UPF0758 protein ABC2615 from Shouchella clausii (strain KSM-K16) (Alkalihalobacillus clausii).